Reading from the N-terminus, the 294-residue chain is Elongation factor Ts (294 aa).

The interval 80–83 (TDFV) is involved in Mg(2+) ion dislocation from EF-Tu.

Belongs to the EF-Ts family.

The protein localises to the cytoplasm. In terms of biological role, associates with the EF-Tu.GDP complex and induces the exchange of GDP to GTP. It remains bound to the aminoacyl-tRNA.EF-Tu.GTP complex up to the GTP hydrolysis stage on the ribosome. In Listeria innocua serovar 6a (strain ATCC BAA-680 / CLIP 11262), this protein is Elongation factor Ts.